The primary structure comprises 135 residues: Small ribosomal subunit protein eS6 (135 aa).

The protein belongs to the eukaryotic ribosomal protein eS6 family.

This Halorubrum lacusprofundi (strain ATCC 49239 / DSM 5036 / JCM 8891 / ACAM 34) protein is Small ribosomal subunit protein eS6.